Consider the following 145-residue polypeptide: Meiotically up-regulated gene 124 protein (145 aa).

2 consecutive transmembrane segments (helical) span residues 18–38 (IILT…CPSI) and 95–115 (FAWS…NFFL).

Its subcellular location is the membrane. Functionally, has a role in meiosis. This Schizosaccharomyces pombe (strain 972 / ATCC 24843) (Fission yeast) protein is Meiotically up-regulated gene 124 protein (mug124).